We begin with the raw amino-acid sequence, 348 residues long: Phosphoribosylformylglycinamidine cyclo-ligase (348 aa).

Belongs to the AIR synthase family.

The protein localises to the cytoplasm. The enzyme catalyses 2-formamido-N(1)-(5-O-phospho-beta-D-ribosyl)acetamidine + ATP = 5-amino-1-(5-phospho-beta-D-ribosyl)imidazole + ADP + phosphate + H(+). It participates in purine metabolism; IMP biosynthesis via de novo pathway; 5-amino-1-(5-phospho-D-ribosyl)imidazole from N(2)-formyl-N(1)-(5-phospho-D-ribosyl)glycinamide: step 2/2. This chain is Phosphoribosylformylglycinamidine cyclo-ligase, found in Cereibacter sphaeroides (strain ATCC 17025 / ATH 2.4.3) (Rhodobacter sphaeroides).